Consider the following 173-residue polypeptide: Photosystem I assembly protein Ycf3 (173 aa).

TPR repeat units lie at residues 35–68 (AYVY…EENP), 72–105 (GETL…NPKQ), and 120–153 (GRTA…NPGG).

Belongs to the Ycf3 family.

The protein localises to the cellular thylakoid membrane. Functionally, essential for the assembly of the photosystem I (PSI) complex. May act as a chaperone-like factor to guide the assembly of the PSI subunits. The sequence is that of Photosystem I assembly protein Ycf3 from Synechococcus sp. (strain WH7803).